The primary structure comprises 165 residues: Large ribosomal subunit protein uL10 (165 aa).

The protein belongs to the universal ribosomal protein uL10 family. As to quaternary structure, part of the ribosomal stalk of the 50S ribosomal subunit. The N-terminus interacts with L11 and the large rRNA to form the base of the stalk. The C-terminus forms an elongated spine to which L12 dimers bind in a sequential fashion forming a multimeric L10(L12)X complex.

In terms of biological role, forms part of the ribosomal stalk, playing a central role in the interaction of the ribosome with GTP-bound translation factors. This is Large ribosomal subunit protein uL10 from Shewanella pealeana (strain ATCC 700345 / ANG-SQ1).